We begin with the raw amino-acid sequence, 687 residues long: POZ (BTB) and AT hook-containing zinc finger 1 (687 aa).

In terms of domain architecture, BTB spans 41–130; that stretch reads CDVLLRVGDE…AYTSRIVVRL (90 aa). Residues 250–260 show a composition bias toward polar residues; sequence PFPNVASSAPP. The segment at 250-279 is disordered; that stretch reads PFPNVASSAPPLTSKRGRGRPRKANLLDSM. The segment at 292-314 adopts a C2H2-type 1 zinc-finger fold; the sequence is LPCGLCGKVFTDANRLRQHEAQH. The disordered stretch occupies residues 332–351; it reads GENGLPISEDPDGPRKRSRT. 5 consecutive C2H2-type zinc fingers follow at residues 355-377, 383-405, 413-436, 442-464, and 495-517; these read VACE…KLSH, YSCP…VRSH, YICQ…KQVH, HKCQ…LACH, and NFCS…VKTH. The disordered stretch occupies residues 564-587; that stretch reads SYGDLSDASDLKTPEKQSANGSFS. A C2H2-type 7 zinc finger spans residues 605–628; the sequence is YPCPECGSFFRSKSYLNKHIQKVH.

Homodimer. Interacts with RNF4. Interacts (via C-terminus) with TP53; this interaction inhibits TP53 ability to activate transcription. In terms of tissue distribution, widely expressed at high levels during embryogenesis, especially in the central nervous system, especially to the actively proliferating neuroblasts in the periventricular neocortical neuroepithelium, in the telencephalic cortical plate and in the hippocampus. Also expressed in a stage-specific manner in the mouse germinal epithelium. While strongly expressed during brain development,m its expression turns down in adult brain.

The protein resides in the nucleus. Its function is as follows. Transcriptional regulator that plays a role in many biological processes such as embryogenesis, senescence, T-cell development or neurogenesis. Interacts with the TP53 protein to control genes that are important in proliferation and in the DNA-damage response. Mechanistically, the interaction inhibits the DNA binding and transcriptional activity of TP53/p53. Part of the transcriptional network modulating regulatory T-cell development and controls the generation of the regulatory T-cell pool under homeostatic conditions. The chain is POZ (BTB) and AT hook-containing zinc finger 1 from Mus musculus (Mouse).